The primary structure comprises 841 residues: Toll-like receptor 4 (841 aa).

The first 23 residues, 1-23 (MMARARLAAALIPATAILSCLRT), serve as a signal peptide directing secretion. The Extracellular segment spans residues 24–632 (ESWDPCVQVV…FRNATCQLSK (609 aa)). The cysteines at positions 29 and 40 are disulfide-linked. N35 and N73 each carry an N-linked (GlcNAc...) asparagine glycan. LRR repeat units lie at residues 55-76 (STKM…NFSS), 79-100 (ELQV…TFQG), 103-124 (HLST…AFSG), 127-148 (SLQK…PIGH), 151-172 (NLKE…EYFS), 176-197 (NLEH…DVKV), and 205-225 (NLSL…TFKE). N-linked (GlcNAc...) asparagine glycosylation is found at N205, N238, N282, and N309. The cysteines at positions 281 and 306 are disulfide-linked. 9 LRR repeats span residues 352–373 (SLKK…FQLP), 374–394 (SLQY…CSHT), 400–422 (NLKH…MGLE), 423–444 (QLEH…SAFL), 448–469 (NLRY…IFTG), 472–495 (SLQT…FTEL), 497–518 (NLTV…AFHS), 521–542 (SLQV…LYEP), and 545–568 (SLRI…QNLP). C390 and C391 are disulfide-bonded. N-linked (GlcNAc...) asparagine glycosylation is found at N497 and N526. A glycan (N-linked (GlcNAc...) asparagine) is linked at N575. Residues 579–630 (NAFACVCEHQSFLQWVKDQRQLLVGAEQMMCAEPLDMEDMPVLSFRNATCQL) enclose the LRRCT domain. Disulfide bonds link C583-C609 and C585-C628. N625 carries an N-linked (GlcNAc...) asparagine glycan. The chain crosses the membrane as a helical span at residues 633–653 (TIISVSVVTVLLVSVVGVLVY). The Cytoplasmic segment spans residues 654–841 (KFYFHLMLLA…TNPQEATTST (188 aa)). The TIR domain maps to 673–816 (SIYDAFVIYS…VFWRRLRKAL (144 aa)). Positions 820-841 (KPQSPEGTADAETNPQEATTST) are disordered. Residues 830-841 (AETNPQEATTST) are compositionally biased toward polar residues.

The protein belongs to the Toll-like receptor family. Belongs to the lipopolysaccharide (LPS) receptor, a multi-protein complex containing at least CD14, LY96 and TLR4. Binding to bacterial LPS leads to homodimerization. Interacts with LY96 via the extracellular domain. Interacts with MYD88 and TIRAP via their respective TIR domains. Interacts with TICAM2. Interacts with NOX4. Interacts with CNPY3 and HSP90B1; this interaction is required for proper folding in the endoplasmic reticulum. Interacts with MAP3K21; this interaction leads to negative regulation of TLR4 signaling. Interacts with CD36, following CD36 stimulation by oxLDL or amyloid-beta 42, and forms a heterodimer with TLR6. The trimeric complex is internalized and triggers inflammatory response. LYN kinase activity facilitates TLR4-TLR6 heterodimerization and signal initiation. Interacts with TICAM1 in response to LPS in a WDFY1-dependent manner. Interacts with WDFY1 in response to LPS. Interacts with SMPDL3B. Interacts with CEACAM1; upon lipopolysaccharide stimulation, forms a complex including TLR4 and the phosphorylated form of SYK and CEACAM1, which in turn, recruits PTPN6 that dephosphorylates SYK, reducing the production of reactive oxygen species (ROS) and lysosome disruption, which in turn, reduces the activity of the inflammasome. Interacts with RFTN1; the interaction occurs in response to lipopolysaccharide stimulation. Interacts with SCIMP; the interaction occurs in response to lipopolysaccharide stimulation and is enhanced by phosphorylation of SCIMP by LYN. This interaction facilitates the phosphorylation of TLR4 by LYN which elicits a selective cytokine response in macrophages. Interacts with TRAF3IP3. Interacts with TREM1; this interaction enhances TLR4-mediated inflammatory response. Interacts with ZG16B/PAUF. Interacts with CD82; this interaction inhibits TLR4-mediated signaling pathway. Post-translationally, phosphorylated on tyrosine residues by LYN after binding lipopolysaccharide. Ubiquitinated by RNF128 via 'Lys-28'-linked polyubiquitin chains, leading to proteasomal degradation.

Its subcellular location is the cell membrane. The protein localises to the early endosome. The protein resides in the cell projection. It localises to the ruffle. Transmembrane receptor that functions as a pattern recognition receptor recognizing pathogen- and damage-associated molecular patterns (PAMPs and DAMPs) to induce innate immune responses via downstream signaling pathways. At the plasma membrane, cooperates with LY96 to mediate the innate immune response to bacterial lipopolysaccharide (LPS). Also involved in LPS-independent inflammatory responses triggered by free fatty acids, such as palmitate, and Ni(2+). Mechanistically, acts via MYD88, TIRAP and TRAF6, leading to NF-kappa-B activation, cytokine secretion and the inflammatory response. Alternatively, CD14-mediated TLR4 internalization via endocytosis is associated with the initiation of a MYD88-independent signaling via the TICAM1-TBK1-IRF3 axis leading to type I interferon production. In addition to the secretion of proinflammatory cytokines, initiates the activation of NLRP3 inflammasome and formation of a positive feedback loop between autophagy and NF-kappa-B signaling cascade. In complex with TLR6, promotes inflammation in monocytes/macrophages by associating with TLR6 and the receptor CD86. Upon ligand binding, such as oxLDL or amyloid-beta 42, the TLR4:TLR6 complex is internalized and triggers inflammatory response, leading to NF-kappa-B-dependent production of CXCL1, CXCL2 and CCL9 cytokines, via MYD88 signaling pathway, and CCL5 cytokine, via TICAM1 signaling pathway. In myeloid dendritic cells, vesicular stomatitis virus glycoprotein G but not LPS promotes the activation of IRF7, leading to type I IFN production in a CD14-dependent manner. This chain is Toll-like receptor 4 (TLR4), found in Bos taurus (Bovine).